The chain runs to 644 residues: Exoribonuclease 2 (644 aa).

The RNB domain maps to 189–516 (RQDLTALNFV…NHRLLKAVIK (328 aa)). In terms of domain architecture, S1 motif spans 561–643 (NTRFAAEIID…ETRSIIARPA (83 aa)).

It belongs to the RNR ribonuclease family. RNase II subfamily.

It localises to the cytoplasm. It catalyses the reaction Exonucleolytic cleavage in the 3'- to 5'-direction to yield nucleoside 5'-phosphates.. Functionally, involved in mRNA degradation. Hydrolyzes single-stranded polyribonucleotides processively in the 3' to 5' direction. The protein is Exoribonuclease 2 of Salmonella dublin (strain CT_02021853).